A 375-amino-acid chain; its full sequence is Chaperone protein DnaJ (375 aa).

Residues 5-70 enclose the J domain; sequence DYYEVLGVSR…QKRAAYDQFG (66 aa). The CR-type zinc finger occupies 131-209; sequence GTTVKIRVPS…CHGSGYVEEQ (79 aa). Cysteine 144, cysteine 147, cysteine 161, cysteine 164, cysteine 183, cysteine 186, cysteine 197, and cysteine 200 together coordinate Zn(2+). CXXCXGXG motif repeat units lie at residues 144–151, 161–168, 183–190, and 197–204; these read CKSCSGSG, CGTCNGAG, CPRCRGAG, and CRSCHGSG.

It belongs to the DnaJ family. Homodimer. Zn(2+) is required as a cofactor.

Its subcellular location is the cytoplasm. In terms of biological role, participates actively in the response to hyperosmotic and heat shock by preventing the aggregation of stress-denatured proteins and by disaggregating proteins, also in an autonomous, DnaK-independent fashion. Unfolded proteins bind initially to DnaJ; upon interaction with the DnaJ-bound protein, DnaK hydrolyzes its bound ATP, resulting in the formation of a stable complex. GrpE releases ADP from DnaK; ATP binding to DnaK triggers the release of the substrate protein, thus completing the reaction cycle. Several rounds of ATP-dependent interactions between DnaJ, DnaK and GrpE are required for fully efficient folding. Also involved, together with DnaK and GrpE, in the DNA replication of plasmids through activation of initiation proteins. The protein is Chaperone protein DnaJ of Hahella chejuensis (strain KCTC 2396).